The primary structure comprises 318 residues: Ribokinase (318 aa).

Substrate contacts are provided by residues 11-13 (NTD), 41-45 (GKGAN), and Glu146. Residues Asn190 and 229–234 (TLGSQG) contribute to the ATP site. Residues Asp256 and Thr258 each contribute to the K(+) site. 261 to 262 (GD) contributes to the ATP binding site. Asp262 contacts substrate. Asp262 functions as the Proton acceptor in the catalytic mechanism. 4 residues coordinate K(+): Thr292, Arg295, Gly297, and Ser301.

Belongs to the carbohydrate kinase PfkB family. Ribokinase subfamily. In terms of assembly, homodimer. Mg(2+) is required as a cofactor.

It is found in the cytoplasm. It localises to the nucleus. It catalyses the reaction D-ribose + ATP = D-ribose 5-phosphate + ADP + H(+). It participates in carbohydrate metabolism; D-ribose degradation; D-ribose 5-phosphate from beta-D-ribopyranose: step 2/2. Its activity is regulated as follows. Activated by a monovalent cation that binds near, but not in, the active site. The most likely occupant of the site in vivo is potassium. Ion binding induces a conformational change that may alter substrate affinity. Its function is as follows. Catalyzes the phosphorylation of ribose at O-5 in a reaction requiring ATP and magnesium. The resulting D-ribose-5-phosphate can then be used either for sythesis of nucleotides, histidine, and tryptophan, or as a component of the pentose phosphate pathway. This Schizosaccharomyces pombe (strain 972 / ATCC 24843) (Fission yeast) protein is Ribokinase.